A 142-amino-acid chain; its full sequence is UPF0305 protein MK0666 (142 aa).

It belongs to the UPF0305 family.

This is UPF0305 protein MK0666 from Methanopyrus kandleri (strain AV19 / DSM 6324 / JCM 9639 / NBRC 100938).